A 285-amino-acid chain; its full sequence is Hsp90 co-chaperone Cdc37-like 1 (285 aa).

Residues 34–54 are disordered; the sequence is LHNSESMDQEQAMAQAELSEL. The stretch at 35 to 73 forms a coiled coil; that stretch reads HNSESMDQEQAMAQAELSELQRSEEEWRRKEAALSQGEN.

It belongs to the CDC37 family. In terms of assembly, forms complexes with Hsp70 and Hsp90.

It localises to the cytoplasm. In terms of biological role, co-chaperone that binds to numerous proteins and promotes their interaction with Hsp70 and Hsp90. This is Hsp90 co-chaperone Cdc37-like 1 (cdc37l1) from Xenopus tropicalis (Western clawed frog).